A 445-amino-acid polypeptide reads, in one-letter code: DNA repair protein RadA (445 aa).

A C4-type zinc finger spans residues 10–27; sequence CSNCANISHKWSGQCFDC. 90–97 contacts ATP; it reads GEPGIGKS. The RadA KNRFG motif signature appears at 249–253; it reads KNRFG. The tract at residues 348–445 is lon-protease-like; it reads EIYLSIAGGL…HLQDLKEIIK (98 aa).

The protein belongs to the RecA family. RadA subfamily.

Its function is as follows. DNA-dependent ATPase involved in processing of recombination intermediates, plays a role in repairing DNA breaks. Stimulates the branch migration of RecA-mediated strand transfer reactions, allowing the 3' invading strand to extend heteroduplex DNA faster. Binds ssDNA in the presence of ADP but not other nucleotides, has ATPase activity that is stimulated by ssDNA and various branched DNA structures, but inhibited by SSB. Does not have RecA's homology-searching function. This Rickettsia typhi (strain ATCC VR-144 / Wilmington) protein is DNA repair protein RadA.